A 367-amino-acid chain; its full sequence is CCN family member 4 (367 aa).

The signal sequence occupies residues M1–A22. Residues R45 to V118 enclose the IGFBP N-terminal domain. Cystine bridges form between C49–C73, C53–C75, C55–C76, and C62–C79. N-linked (GlcNAc...) asparagine glycosylation is present at N86. 2 disulfide bridges follow: C87/C101 and C93/C115. One can recognise a VWFC domain in the interval V121–D186. Residue N143 is glycosylated (N-linked (GlcNAc...) asparagine). The TSP type-1 domain maps to N215–D260. Disulfide bonds link C273-C310, C290-C324, C301-C340, C304-C342, and C309-C346. One can recognise a CTCK domain in the interval C273–R347. N284 is a glycosylation site (N-linked (GlcNAc...) asparagine). N343 carries N-linked (GlcNAc...) asparagine glycosylation.

It belongs to the CCN family.

Its subcellular location is the secreted. Functionally, downstream regulator in the Wnt/Frizzled-signaling pathway. Associated with cell survival. Adheres to skin and melanoma fibroblasts. In vitro binding to skin fibroblasts occurs through the proteoglycans, decorin and biglycan. The polypeptide is CCN family member 4 (Ccn4) (Rattus norvegicus (Rat)).